We begin with the raw amino-acid sequence, 64 residues long: Frontoxin V (64 aa).

Cystine bridges form between Cys-3–Cys-24, Cys-6–Cys-11, Cys-17–Cys-41, Cys-45–Cys-57, and Cys-58–Cys-63.

Expressed by the venom gland.

It localises to the secreted. Its function is as follows. Produces peripheral paralysis by blocking neuromuscular transmission at the postsynaptic site. Binds to the muscular nicotinic acetylcholine receptor (nAChR). This Micrurus frontalis (Coral snake) protein is Frontoxin V.